Here is a 469-residue protein sequence, read N- to C-terminus: ATP-dependent protease ATPase subunit HslU (469 aa).

Residues Ile-24, 66 to 71 (GVGKTE), Asp-282, Glu-347, and Arg-419 each bind ATP.

It belongs to the ClpX chaperone family. HslU subfamily. In terms of assembly, a double ring-shaped homohexamer of HslV is capped on each side by a ring-shaped HslU homohexamer. The assembly of the HslU/HslV complex is dependent on binding of ATP.

Its subcellular location is the cytoplasm. In terms of biological role, ATPase subunit of a proteasome-like degradation complex; this subunit has chaperone activity. The binding of ATP and its subsequent hydrolysis by HslU are essential for unfolding of protein substrates subsequently hydrolyzed by HslV. HslU recognizes the N-terminal part of its protein substrates and unfolds these before they are guided to HslV for hydrolysis. In Listeria welshimeri serovar 6b (strain ATCC 35897 / DSM 20650 / CCUG 15529 / CIP 8149 / NCTC 11857 / SLCC 5334 / V8), this protein is ATP-dependent protease ATPase subunit HslU.